The primary structure comprises 482 residues: MTAKTLYDKLWEMHEVTRRDDGSSLIYIDRHILHEVTSPQAFEGLRLAGRNPWRIDANIATPDHNVPTTRAERQGGLESISDEVSRLQVQTLDENCDDFGILEFKMNDARQGIVHVVGPEQGATLPGMTVVCGDSHTSTHGAFGALAHGIGTSEVEHVLATQCLITKKMKNLQVRVEGTLPFGVTAKDIVLAVIGKIGTAGGNGHALEFAGSAIRALSMEGRMTICNMSIEAGARVGMVAVDEKTIAYVKGRPFAPKGADWDAAVALWSTLVSDPDAHFDTVVELHAEDIKPQVSWGTSPEMVLAIDQHVPDPATEQDPTKRNSIERALKYMGLKANQAITDIRLDRVFIGSCTNSRIEDLRAAAAVAKGRKVASTIKQALVVPGSGLVKAQAEAEGLDKVFLDAGFEWREPGCSMCLAMNPDKLGSGEHCASTSNRNFEGRQGAGGRTHLVSPAMAAAAAVSGHFVDVRELGDSGVGIRDS.

[4Fe-4S] cluster is bound by residues Cys-353, Cys-414, and Cys-417.

Belongs to the aconitase/IPM isomerase family. LeuC type 1 subfamily. As to quaternary structure, heterodimer of LeuC and LeuD. [4Fe-4S] cluster serves as cofactor.

It carries out the reaction (2R,3S)-3-isopropylmalate = (2S)-2-isopropylmalate. It participates in amino-acid biosynthesis; L-leucine biosynthesis; L-leucine from 3-methyl-2-oxobutanoate: step 2/4. Functionally, catalyzes the isomerization between 2-isopropylmalate and 3-isopropylmalate, via the formation of 2-isopropylmaleate. The polypeptide is 3-isopropylmalate dehydratase large subunit (Xanthomonas oryzae pv. oryzae (strain MAFF 311018)).